The chain runs to 443 residues: Methionine aminopeptidase 2-1 (443 aa).

Residues 1-90 (MAAQADDELN…RVPVSELFPN (90 aa)) are disordered. Positions 33-48 (ADNDDSEDDEKEEEGG) are enriched in acidic residues. The segment covering 58–73 (KKKKKRKPKKKKKGGA) has biased composition (basic residues). Substrate is bound at residue histidine 196. Residues aspartate 216, aspartate 227, and histidine 296 each coordinate a divalent metal cation. Position 304 (histidine 304) interacts with substrate. Residues glutamate 329 and glutamate 424 each coordinate a divalent metal cation.

Belongs to the peptidase M24A family. Methionine aminopeptidase eukaryotic type 2 subfamily. Co(2+) serves as cofactor. Requires Zn(2+) as cofactor. The cofactor is Mn(2+). It depends on Fe(2+) as a cofactor.

It localises to the cytoplasm. It carries out the reaction Release of N-terminal amino acids, preferentially methionine, from peptides and arylamides.. In terms of biological role, cotranslationally removes the N-terminal methionine from nascent proteins. The N-terminal methionine is often cleaved when the second residue in the primary sequence is small and uncharged (Met-Ala-, Cys, Gly, Pro, Ser, Thr, or Val). The protein is Methionine aminopeptidase 2-1 of Talaromyces stipitatus (strain ATCC 10500 / CBS 375.48 / QM 6759 / NRRL 1006) (Penicillium stipitatum).